The sequence spans 185 residues: CDP-diacylglycerol--glycerol-3-phosphate 3-phosphatidyltransferase (185 aa).

4 consecutive transmembrane segments (helical) span residues 7–26 (IFLT…AFYL), 33–52 (FITT…DGYL), 89–108 (FWIT…ISAL), and 151–172 (IAAI…IQYL).

It belongs to the CDP-alcohol phosphatidyltransferase class-I family.

It is found in the cell membrane. It catalyses the reaction a CDP-1,2-diacyl-sn-glycerol + sn-glycerol 3-phosphate = a 1,2-diacyl-sn-glycero-3-phospho-(1'-sn-glycero-3'-phosphate) + CMP + H(+). It functions in the pathway phospholipid metabolism; phosphatidylglycerol biosynthesis; phosphatidylglycerol from CDP-diacylglycerol: step 1/2. Functionally, this protein catalyzes the committed step to the synthesis of the acidic phospholipids. The chain is CDP-diacylglycerol--glycerol-3-phosphate 3-phosphatidyltransferase (pgsA) from Haemophilus influenzae (strain ATCC 51907 / DSM 11121 / KW20 / Rd).